The following is a 239-amino-acid chain: Ribulose-phosphate 3-epimerase (239 aa).

Substrate is bound at residue Ser9. A divalent metal cation-binding residues include His34, Asp36, and His78. The active-site Proton acceptor is the Asp36. Substrate-binding positions include His78, 154–157, 183–185, and 205–207; these read GFGG, DGG, and GTS. Asp183 is a binding site for a divalent metal cation. Asp183 (proton donor) is an active-site residue.

The protein belongs to the ribulose-phosphate 3-epimerase family. Co(2+) serves as cofactor. Fe(2+) is required as a cofactor. Requires Mn(2+) as cofactor. It depends on Zn(2+) as a cofactor.

It catalyses the reaction D-ribulose 5-phosphate = D-xylulose 5-phosphate. It participates in carbohydrate degradation; pentose phosphate pathway; D-xylulose 5-phosphate from D-ribulose 5-phosphate (non-oxidative stage): step 1/1. Catalyzes the reversible epimerization of D-ribulose 5-phosphate to D-xylulose 5-phosphate. The chain is Ribulose-phosphate 3-epimerase (RPE1) from Eremothecium gossypii (strain ATCC 10895 / CBS 109.51 / FGSC 9923 / NRRL Y-1056) (Yeast).